We begin with the raw amino-acid sequence, 807 residues long: DNA gyrase subunit B (807 aa).

The Toprim domain occupies 429–543 (SELFIVEGDS…KGYLYIAQPP (115 aa)). Mg(2+) is bound by residues glutamate 435, aspartate 508, and aspartate 510.

The protein belongs to the type II topoisomerase GyrB family. Heterotetramer, composed of two GyrA and two GyrB chains. In the heterotetramer, GyrA contains the active site tyrosine that forms a transient covalent intermediate with DNA, while GyrB binds cofactors and catalyzes ATP hydrolysis. Requires Mg(2+) as cofactor. Mn(2+) is required as a cofactor. It depends on Ca(2+) as a cofactor.

It is found in the cytoplasm. It catalyses the reaction ATP-dependent breakage, passage and rejoining of double-stranded DNA.. Functionally, a type II topoisomerase that negatively supercoils closed circular double-stranded (ds) DNA in an ATP-dependent manner to modulate DNA topology and maintain chromosomes in an underwound state. Negative supercoiling favors strand separation, and DNA replication, transcription, recombination and repair, all of which involve strand separation. Also able to catalyze the interconversion of other topological isomers of dsDNA rings, including catenanes and knotted rings. Type II topoisomerases break and join 2 DNA strands simultaneously in an ATP-dependent manner. This is DNA gyrase subunit B from Rickettsia conorii (strain ATCC VR-613 / Malish 7).